A 464-amino-acid polypeptide reads, in one-letter code: 3-isopropylmalate dehydratase large subunit (464 aa).

[4Fe-4S] cluster is bound by residues cysteine 337, cysteine 397, and cysteine 400.

This sequence belongs to the aconitase/IPM isomerase family. LeuC type 1 subfamily. Heterodimer of LeuC and LeuD. [4Fe-4S] cluster serves as cofactor.

It catalyses the reaction (2R,3S)-3-isopropylmalate = (2S)-2-isopropylmalate. Its pathway is amino-acid biosynthesis; L-leucine biosynthesis; L-leucine from 3-methyl-2-oxobutanoate: step 2/4. Its function is as follows. Catalyzes the isomerization between 2-isopropylmalate and 3-isopropylmalate, via the formation of 2-isopropylmaleate. The sequence is that of 3-isopropylmalate dehydratase large subunit from Bacillus cereus (strain AH187).